The sequence spans 208 residues: Large ribosomal subunit protein uL3 (208 aa).

The interval 116 to 148 (GFQGVIKRHGQSRGPMAHGSRYHRRPGSMGPVA) is disordered.

It belongs to the universal ribosomal protein uL3 family. In terms of assembly, part of the 50S ribosomal subunit. Forms a cluster with proteins L14 and L19.

Its function is as follows. One of the primary rRNA binding proteins, it binds directly near the 3'-end of the 23S rRNA, where it nucleates assembly of the 50S subunit. In Streptococcus pyogenes serotype M12 (strain MGAS2096), this protein is Large ribosomal subunit protein uL3.